Consider the following 264-residue polypeptide: Non-homologous end-joining factor xrc4 (264 aa).

A compositionally biased stretch (basic and acidic residues) spans Arg173–Tyr186. Positions Arg173–Glu264 are disordered. The segment covering Gln200–Ser209 has biased composition (polar residues). Over residues Asp248 to Glu264 the composition is skewed to basic and acidic residues.

This sequence belongs to the XRCC4-XLF family. XRCC4 subfamily. In terms of assembly, interacts with lig4; the interaction is direct.

The protein localises to the nucleus. Functionally, involved in double-strand break repair via non-homologous end joining (NHEJ); the repair of a double-strand break in DNA in which the two broken ends are rejoined with little or no sequence complementarity. In Schizosaccharomyces pombe (strain 972 / ATCC 24843) (Fission yeast), this protein is Non-homologous end-joining factor xrc4.